Reading from the N-terminus, the 302-residue chain is Phosphoribosylaminoimidazole-succinocarboxamide synthase (302 aa).

Belongs to the SAICAR synthetase family.

The catalysed reaction is 5-amino-1-(5-phospho-D-ribosyl)imidazole-4-carboxylate + L-aspartate + ATP = (2S)-2-[5-amino-1-(5-phospho-beta-D-ribosyl)imidazole-4-carboxamido]succinate + ADP + phosphate + 2 H(+). It participates in purine metabolism; IMP biosynthesis via de novo pathway; 5-amino-1-(5-phospho-D-ribosyl)imidazole-4-carboxamide from 5-amino-1-(5-phospho-D-ribosyl)imidazole-4-carboxylate: step 1/2. The chain is Phosphoribosylaminoimidazole-succinocarboxamide synthase from Cupriavidus pinatubonensis (strain JMP 134 / LMG 1197) (Cupriavidus necator (strain JMP 134)).